A 373-amino-acid polypeptide reads, in one-letter code: Glutamine synthetase (373 aa).

Ala-2 bears the N-acetylalanine mark. A required for glutamine-induced ubiquitination by CRL4(CRBN) and proteasomal degradation region spans residues 2-25; it reads ATSASSHLNKGIKQVYMSLPQGEK. Lys-11 and Lys-14 each carry N6-acetyllysine. In terms of domain architecture, GS beta-grasp spans 24 to 106; that stretch reads EKVQAMYIWI…VFCEVFKYNR (83 aa). Position 104 is a phosphotyrosine (Tyr-104). The 261-residue stretch at 113-373 folds into the GS catalytic domain; the sequence is LRHTCKRIMD…TGDEPFQYKN (261 aa). Residue Glu-134 coordinates ATP. Residues Glu-134, Glu-136, Glu-196, and Glu-203 each coordinate Mn(2+). An ATP-binding site is contributed by 203-208; that stretch reads EFQIGP. Position 246–247 (246–247) interacts with L-glutamate; the sequence is NW. A Mn(2+)-binding site is contributed by His-253. ATP contacts are provided by residues 255–257, Arg-319, and Arg-324; that span reads NFS. Arg-319 is a binding site for L-glutamate. An ADP-binding site is contributed by 336–338; it reads YFE. Glu-338 contributes to the Mn(2+) binding site. Arg-340 is an L-glutamate binding site. At Ser-343 the chain carries Phosphoserine.

It belongs to the glutamine synthetase family. As to quaternary structure, decamer; composed of two pentamers. Interacts with PALMD. Interacts with RHOJ. Interacts with BEST2; this interaction tethers a fraction of GLUL to the membrane, causing a decrease of cytosolic glutamine synthase (GS) activity and inhibits the chloride channel activity of BEST2 by affecting the gating at the aperture in the absence of intracellular glutamate. It depends on Mg(2+) as a cofactor. Mn(2+) serves as cofactor. In terms of processing, palmitoylated; undergoes autopalmitoylation. Acetylated by EP300/p300; acetylation is stimulated by increased glutamine levels and promotes ubiquitin-mediated proteasomal degradation. Post-translationally, ubiquitinated by ZNRF1. Ubiquitinated by the DCX (DDB1-CUL4-X-box) E3 ubiquitin-protein ligase complex called CRL4(CRBN), leading to proteasomal degradation.

It is found in the cytoplasm. Its subcellular location is the cytosol. The protein resides in the microsome. It localises to the mitochondrion. The protein localises to the cell membrane. The enzyme catalyses L-glutamate + NH4(+) + ATP = L-glutamine + ADP + phosphate + H(+). It carries out the reaction L-cysteinyl-[protein] + hexadecanoyl-CoA = S-hexadecanoyl-L-cysteinyl-[protein] + CoA. With respect to regulation, glutamine synthetase activity is inhibited by methionine sulfoximine (MSO). In terms of biological role, glutamine synthetase that catalyzes the ATP-dependent conversion of glutamate and ammonia to glutamine. Its role depends on tissue localization: in the brain, it regulates the levels of toxic ammonia and converts neurotoxic glutamate to harmless glutamine, whereas in the liver, it is one of the enzymes responsible for the removal of ammonia. Plays a key role in ammonium detoxification during erythropoiesis: the glutamine synthetase activity is required to remove ammonium generated by porphobilinogen deaminase (HMBS) during heme biosynthesis to prevent ammonium accumulation and oxidative stress. Essential for proliferation of fetal skin fibroblasts. Independently of its glutamine synthetase activity, required for endothelial cell migration during vascular development. Involved in angiogenesis by regulating membrane localization and activation of the GTPase RHOJ, possibly by promoting RHOJ palmitoylation. May act as a palmitoyltransferase for RHOJ: able to autopalmitoylate and then transfer the palmitoyl group to RHOJ. Plays a role in ribosomal 40S subunit biogenesis. Through the interaction with BEST2, inhibits BEST2 channel activity by affecting the gating at the aperture in the absence of intracellular L-glutamate, but sensitizes BEST2 to intracellular L-glutamate, which promotes the opening of BEST2 and thus relieves its inhibitory effect on BEST2. This chain is Glutamine synthetase, found in Sus scrofa (Pig).